Reading from the N-terminus, the 869-residue chain is MDQDIKTIIQYPTGATEFDIPFDYLSRKFVRVSLVSDDNRRLLRNITEYRYVSKTRVKILVDTTGFDRVEIRRFTSASERVVDFSDGSVLRANDLNVSQLQSSHIAEEARDSALLAMPEDDAGNLDARNRKIVRLAPGEVGTDAVNKDQLDTTLGEAGGILSEIKQTQQDIGDYIEEFANGTTYLKNIVMVYNQGSANGGETAIVLDRTDEVFAVPVIYINGDRQEVGFQFSYDNTTKTITLVKPLQRGDFVVMLTSEGTHSLASILAGPDGASRIGASGGLTVQQAIDRILESHIILPQWFGARGDWSDTTNTGTDDTAAFEAAIEMAVTLNYTEVYVPAGSYLITRELNLNGGNRNTRLGARIRGAGWASSVLVFKAPAPETPCISIIGTPGSHTSKGVEKLLIKSHPSTTGQGIGILCRNTCFAHVTEFLIANMNIGICLENYMTAGSFTEFCYFTNGRLFTNNINIQFNKVQNGDNSFHGSNFKNIQNQVKKNGGIGVQIVGNPQGAAYLYNMTWDMQFFGGAGCIAMDLNYCNTDYVGGKLTGESDLTFKADGNSRFDFHGRFDSIGKVIWDTATEGARTGGTYVFANRTSLENAVMTNADAGRLPAGVSARPLPADWADRNNNGVYPATFHIRGPNIESMGFVTYDSPGNGFFFGQLPFQGNIKDFNPRFWFNSGGTSFNTAATAYTMKLVNGEGLYFSDTTIRALSDGNVSLGEWNRRFKEARFTSWDIGTSIVPTSTATKDIGTNSNRIRDIYLANSPNVTSDSRKKSFIKPIDEALLDAWETIPFSQWKLNDSVAEKGSEARWHVGYIAQKVEESLQAFGLNAGDYGLITIGDDGFMLRMEECLVVEAAMIRRKLGLTYK.

The Peptidase S74 domain occupies Ser770–Lys869.

In the N-terminal section; belongs to the Teseptimavirus fiber family. In terms of assembly, homotrimer. Interacts (via N-terminus) with depolymerase 2 (via N-terminus); this interaction probably gives rise to a branched tailspike. Proteolytic cleavage and release of the chaperone in the host cytosol stabilizes the folded protein. The cleavage gives rise to the mature tail spike protein but is not essential for catalytic activity.

It is found in the virion. Functions as a receptor binding protein (RBP) and probably mediates the attachment to the host capsular exopolysaccharides. Displays a depolymerase activity that specifically degrades the K3-type polysaccharides of Klebsiella pneumoniae capsule, which allows the phage to reach the host cell membrane and bind the entry receptor. This Klebsiella pneumoniae (Bacteriophage KP32) protein is Depolymerase 1, capsule K3-specific.